A 340-amino-acid chain; its full sequence is DNA-directed RNA polymerase subunit alpha (340 aa).

The tract at residues 1 to 236 (MLSLSKNWNT…EQLQLFIAFE (236 aa)) is alpha N-terminal domain (alpha-NTD). Residues 251 to 340 (FSPYLLKRVD…LSKRYEDSYN (90 aa)) are alpha C-terminal domain (alpha-CTD).

This sequence belongs to the RNA polymerase alpha chain family. As to quaternary structure, homodimer. The RNAP catalytic core consists of 2 alpha, 1 beta, 1 beta' and 1 omega subunit. When a sigma factor is associated with the core the holoenzyme is formed, which can initiate transcription.

It catalyses the reaction RNA(n) + a ribonucleoside 5'-triphosphate = RNA(n+1) + diphosphate. Functionally, DNA-dependent RNA polymerase catalyzes the transcription of DNA into RNA using the four ribonucleoside triphosphates as substrates. In Rickettsia prowazekii (strain Madrid E), this protein is DNA-directed RNA polymerase subunit alpha.